Here is a 251-residue protein sequence, read N- to C-terminus: Imidazole glycerol phosphate synthase subunit HisF (251 aa).

Catalysis depends on residues Asp11 and Asp130.

It belongs to the HisA/HisF family. As to quaternary structure, heterodimer of HisH and HisF.

It is found in the cytoplasm. It carries out the reaction 5-[(5-phospho-1-deoxy-D-ribulos-1-ylimino)methylamino]-1-(5-phospho-beta-D-ribosyl)imidazole-4-carboxamide + L-glutamine = D-erythro-1-(imidazol-4-yl)glycerol 3-phosphate + 5-amino-1-(5-phospho-beta-D-ribosyl)imidazole-4-carboxamide + L-glutamate + H(+). It functions in the pathway amino-acid biosynthesis; L-histidine biosynthesis; L-histidine from 5-phospho-alpha-D-ribose 1-diphosphate: step 5/9. IGPS catalyzes the conversion of PRFAR and glutamine to IGP, AICAR and glutamate. The HisF subunit catalyzes the cyclization activity that produces IGP and AICAR from PRFAR using the ammonia provided by the HisH subunit. The polypeptide is Imidazole glycerol phosphate synthase subunit HisF (Listeria welshimeri serovar 6b (strain ATCC 35897 / DSM 20650 / CCUG 15529 / CIP 8149 / NCTC 11857 / SLCC 5334 / V8)).